The chain runs to 327 residues: Aspartate--ammonia ligase (327 aa).

This sequence belongs to the class-II aminoacyl-tRNA synthetase family. AsnA subfamily.

The protein resides in the cytoplasm. The catalysed reaction is L-aspartate + NH4(+) + ATP = L-asparagine + AMP + diphosphate + H(+). Its pathway is amino-acid biosynthesis; L-asparagine biosynthesis; L-asparagine from L-aspartate (ammonia route): step 1/1. The polypeptide is Aspartate--ammonia ligase (Mycoplasmoides gallisepticum (strain R(low / passage 15 / clone 2)) (Mycoplasma gallisepticum)).